A 275-amino-acid chain; its full sequence is Phosphatidylglycerol--prolipoprotein diacylglyceryl transferase (275 aa).

A run of 3 helical transmembrane segments spans residues 18–38, 55–75, and 89–109; these read IEVH…YFIA, IIFW…VIFQ, and IWHG…TGVI. Arginine 137 lines the a 1,2-diacyl-sn-glycero-3-phospho-(1'-sn-glycerol) pocket. The next 2 membrane-spanning stretches (helical) occupy residues 203–223 and 235–255; these read IGET…FVEG and IRVA…MIIY.

The protein belongs to the Lgt family.

The protein localises to the cell membrane. The catalysed reaction is L-cysteinyl-[prolipoprotein] + a 1,2-diacyl-sn-glycero-3-phospho-(1'-sn-glycerol) = an S-1,2-diacyl-sn-glyceryl-L-cysteinyl-[prolipoprotein] + sn-glycerol 1-phosphate + H(+). The protein operates within protein modification; lipoprotein biosynthesis (diacylglyceryl transfer). Catalyzes the transfer of the diacylglyceryl group from phosphatidylglycerol to the sulfhydryl group of the N-terminal cysteine of a prolipoprotein, the first step in the formation of mature lipoproteins. This chain is Phosphatidylglycerol--prolipoprotein diacylglyceryl transferase, found in Staphylococcus carnosus (strain TM300).